A 5628-amino-acid polypeptide reads, in one-letter code: Polyketide synthase ThaG (5628 aa).

Residues 13–448 form the Ketosynthase family 3 (KS3) 1 domain; the sequence is HDDIAVIGIA…GTNAHVVLRE (436 aa). Catalysis depends on for beta-ketoacyl synthase 1 activity residues Cys184, His319, and His361. Disordered regions lie at residues 552–613 and 1156–1183; these read GNLV…DGPT and ASPG…RAEA. The segment covering 559-589 has biased composition (basic and acidic residues); the sequence is GPHDEQADHDGSGEHGEHGERARAGADDLSR. Low complexity predominate over residues 1156–1173; sequence ASPGAASSGAAAPNAASD. Over residues 1174–1183 the composition is skewed to basic and acidic residues; that stretch reads ASRDTERAEA. A Carrier 1 domain is found at 1209–1286; sequence AHGSARLPAL…RLAGHLATRL (78 aa). Ser1246 is subject to O-(pantetheine 4'-phosphoryl)serine. Residues 1373-1781 form the Ketosynthase family 3 (KS3) 2 domain; it reads YEPIAIVGMS…GTNAHVIVEA (409 aa). Catalysis depends on for beta-ketoacyl synthase 2 activity residues Cys1529, His1664, and His1704. The interval 1967–2099 is N-terminal hotdog fold 1; sequence AREPGARERA…GVVDELNEPA (133 aa). Residues 1967–2261 enclose the PKS/mFAS DH 1 domain; it reads AREPGARERA…SARWRKLAGA (295 aa). Residue His1999 is the Proton acceptor; for dehydratase activity 1 of the active site. The C-terminal hotdog fold 1 stretch occupies residues 2113–2261; sequence AGERVDGAAL…SARWRKLAGA (149 aa). Asp2175 acts as the Proton donor; for dehydratase activity 1 in catalysis. Residues 2426–2446 are disordered; that stretch reads DADEDDRDGREPAGGPPLRDD. Positions 2702-2780 constitute a Carrier 2 domain; sequence PAARVDLHAL…AIARALDASA (79 aa). Residues 2817–2836 are disordered; the sequence is TPPDAGAPQRGAHAAAAEGS. Positions 2822–2835 are enriched in low complexity; sequence GAPQRGAHAAAAEG. The Carrier 3 domain maps to 2862 to 2935; the sequence is ARVGARLSAL…ELTDYFVRRH (74 aa). At Ser2896 the chain carries O-(pantetheine 4'-phosphoryl)serine. The region spanning 3005–3430 is the Ketosynthase family 3 (KS3) 3 domain; the sequence is ADAIAVIGLA…GANAHVIVRE (426 aa). Residues Cys3175, His3310, and His3351 each act as for beta-ketoacyl synthase 3 activity in the active site. The tract at residues 3526–3546 is disordered; the sequence is PGKKQLRGNGRARRGDAPPAG. The tract at residues 3621 to 3743 is N-terminal hotdog fold 2; it reads HPMLDANRSE…GRSPSRAARG (123 aa). Residues 3621-3895 form the PKS/mFAS DH 2 domain; the sequence is HPMLDANRSE…SRAAASWRTA (275 aa). Catalysis depends on His3650, which acts as the Proton acceptor; for dehydratase activity 2. The C-terminal hotdog fold 2 stretch occupies residues 3758–3895; it reads RAAPAFDADA…SRAAASWRTA (138 aa). Asp3818 (proton donor; for dehydratase activity 2) is an active-site residue. Residues 3917–3942 form a disordered region; that stretch reads PAAESPSAATSTSAATSPAISTSAAT. In terms of domain architecture, Carrier 4 spans 4840 to 4914; the sequence is TRTAALLRSL…ALAAYVGSQL (75 aa). Ser4874 is modified (O-(pantetheine 4'-phosphoryl)serine). Residues 4960-4992 are disordered; the sequence is APRARTGADAPDTSLASSASSISSARASSPASP. Positions 4998 to 5424 constitute a Ketosynthase family 3 (KS3) 4 domain; sequence SFDVAIVGAS…GVNAHVVLEE (427 aa). Active-site for beta-ketoacyl synthase 4 activity residues include Cys5158, His5293, and His5339. Residues 5470–5544 enclose the Carrier 5 domain; sequence ARIEAVIRDA…ALRDHVAERI (75 aa). O-(pantetheine 4'-phosphoryl)serine is present on Ser5504. The tract at residues 5573–5603 is disordered; the sequence is VSEATEASDASEASDASEASEASEASEASKA.

Pantetheine 4'-phosphate is required as a cofactor.

Its subcellular location is the cytoplasm. Its pathway is antibiotic biosynthesis. Its function is as follows. Involved in production of the polyketide antibiotic thailandamide. The polypeptide is Polyketide synthase ThaG (Burkholderia thailandensis (strain ATCC 700388 / DSM 13276 / CCUG 48851 / CIP 106301 / E264)).